Here is a 1330-residue protein sequence, read N- to C-terminus: ABC multidrug transporter mdr4 (1330 aa).

Asn-3 carries N-linked (GlcNAc...) asparagine glycosylation. 6 helical membrane-spanning segments follow: residues Val-90–Leu-110, Val-144–Cys-164, Lys-218–Ile-238, Ile-243–His-263, His-324–Trp-344, and Ile-370–Phe-390. Residues Ile-94–Ser-392 enclose the ABC transmembrane type-1 1 domain. The 239-residue stretch at Ile-428–Leu-666 folds into the ABC transporter 1 domain. Residue Gly-463–Ser-470 coordinates ATP. N-linked (GlcNAc...) asparagine glycosylation occurs at Asn-707. Positions Val-717–Arg-736 are disordered. Positions Ser-722–Arg-733 are enriched in basic and acidic residues. The next 6 helical transmembrane spans lie at Leu-761–Phe-781, Leu-806–Phe-826, Ala-871–Ile-893, Ala-903–Met-923, Ala-989–Gly-1009, and Phe-1023–Leu-1043. One can recognise an ABC transmembrane type-1 2 domain in the interval Leu-761–Lys-1049. Residues Ala-1086–His-1325 enclose the ABC transporter 2 domain. Gly-1121–Ser-1128 contributes to the ATP binding site.

Belongs to the ABC transporter superfamily. ABCB family. Multidrug resistance exporter (TC 3.A.1.201) subfamily.

Its subcellular location is the cell membrane. The catalysed reaction is itraconazole(in) + ATP + H2O = itraconazole(out) + ADP + phosphate + H(+). The enzyme catalyses voriconazole(in) + ATP + H2O = voriconazole(out) + ADP + phosphate + H(+). Pleiotropic ABC efflux transporter that confers resistance to azoles such as itraconazole and voriconazole. The sequence is that of ABC multidrug transporter mdr4 from Aspergillus fumigatus (strain ATCC MYA-4609 / CBS 101355 / FGSC A1100 / Af293) (Neosartorya fumigata).